The primary structure comprises 60 residues: MARYRHSRSRSRSRYQRRRRRRSRYRSQRRRYRRRRGSRRRRRRGRRRGYRRRYSRRRRY.

Positions 1–60 are disordered; sequence MARYRHSRSRSRSRYQRRRRRRSRYRSQRRRYRRRRGSRRRRRRGRRRGYRRRYSRRRRY.

Belongs to the protamine P1 family. Testis.

It localises to the nucleus. It is found in the chromosome. Functionally, protamines substitute for histones in the chromatin of sperm during the haploid phase of spermatogenesis. They compact sperm DNA into a highly condensed, stable and inactive complex. This chain is Sperm protamine P1 (PRM1), found in Phascolarctos cinereus (Koala).